We begin with the raw amino-acid sequence, 194 residues long: Imidazoleglycerol-phosphate dehydratase (194 aa).

This sequence belongs to the imidazoleglycerol-phosphate dehydratase family.

The protein resides in the cytoplasm. The enzyme catalyses D-erythro-1-(imidazol-4-yl)glycerol 3-phosphate = 3-(imidazol-4-yl)-2-oxopropyl phosphate + H2O. Its pathway is amino-acid biosynthesis; L-histidine biosynthesis; L-histidine from 5-phospho-alpha-D-ribose 1-diphosphate: step 6/9. In Oceanobacillus iheyensis (strain DSM 14371 / CIP 107618 / JCM 11309 / KCTC 3954 / HTE831), this protein is Imidazoleglycerol-phosphate dehydratase.